The primary structure comprises 388 residues: Deoxyuridine 5'-triphosphate nucleotidohydrolase (388 aa).

The span at E77–E88 shows a compositional bias: basic and acidic residues. Disordered regions lie at residues E77–P96 and T336–P388. Acidic residues predominate over residues V351–K363.

It belongs to the dUTPase family. Mg(2+) is required as a cofactor.

The protein resides in the virion. The enzyme catalyses dUTP + H2O = dUMP + diphosphate + H(+). The protein operates within pyrimidine metabolism; dUMP biosynthesis; dUMP from dCTP (dUTP route): step 2/2. In terms of biological role, involved in nucleotide metabolism: produces dUMP, the immediate precursor of thymidine nucleotides and decreases the intracellular concentration of dUTP to avoid uracil incorporation into viral DNA. This is Deoxyuridine 5'-triphosphate nucleotidohydrolase from Human cytomegalovirus (strain AD169) (HHV-5).